Consider the following 705-residue polypeptide: Dynein axonemal intermediate chain 1 (705 aa).

Disordered stretches follow at residues 1–44 and 122–169; these read MPSK…AVRP and AGSQ…DVPA. A phosphoserine mark is found at S124 and S127. Polar residues predominate over residues 124–135; that stretch reads SQESVKVVTSDT. Residues 136-159 are compositionally biased toward acidic residues; sequence EILEEEEEPKEGEGEGEGEAEGEA. WD repeat units lie at residues 386 to 426, 435 to 478, 543 to 583, 585 to 625, and 633 to 672; these read SSES…SQPC, KHTD…LVHI, AHNM…PMFI, DLNA…YEAI, and KKKNKITHVQFNPIHPIIIVGDDRGHITCLKLSPNLRKMP.

Belongs to the dynein intermediate chain family. In terms of assembly, consists of at least two heavy chains and a number of intermediate and light chains. Interacts with BICD2. Interacts with CFAP45 and CFAP52. Interacts with CFAP53.

It is found in the cytoplasm. Its subcellular location is the cytoskeleton. The protein resides in the cilium axoneme. Functionally, part of the dynein complex of respiratory cilia. The sequence is that of Dynein axonemal intermediate chain 1 (Dnai1) from Rattus norvegicus (Rat).